Reading from the N-terminus, the 388-residue chain is MRYLTAGESHGPSLTAIIEGIPAGLKLSAKDINEDLKRRQGGYGRGNRMKIETDQVIISSGVRHGKTLGSPITLTVTNKDHSKWLDIMSVEDIEERLKQKRRIKHPRPGHADLVGGIKYRFDDLRNALERSSARETTMRVAIGAIAKRILKEIGIEIANHIVVFGGKEITVPDKLTVQQIKVLSSQSQVAIVNPSFEQEIKDYIDSVKKAGDTIGGVIETIVGGVPVGLGSYVHWDRKLDAKIAQAVVSINAFKGVEFGLGFKSGFLKGSQVMDSISWTKDQGYIRQSNNLGGFEGGMTNGEPIVVRGVMKPIPTLYKPLMSVDIDTHEPYRATVERSDPTALPAAGVVMEAVVATVLVTEVLEKFSSDNMYELKEAVKLYRNYVNHF.

Residues Arg39 and Arg45 each coordinate NADP(+). FMN contacts are provided by residues 130 to 132 (RSS), 251 to 252 (NA), Gly296, 311 to 315 (KPIPT), and Arg337.

This sequence belongs to the chorismate synthase family. In terms of assembly, homotetramer. FMNH2 is required as a cofactor.

It carries out the reaction 5-O-(1-carboxyvinyl)-3-phosphoshikimate = chorismate + phosphate. Its pathway is metabolic intermediate biosynthesis; chorismate biosynthesis; chorismate from D-erythrose 4-phosphate and phosphoenolpyruvate: step 7/7. Its function is as follows. Catalyzes the anti-1,4-elimination of the C-3 phosphate and the C-6 proR hydrogen from 5-enolpyruvylshikimate-3-phosphate (EPSP) to yield chorismate, which is the branch point compound that serves as the starting substrate for the three terminal pathways of aromatic amino acid biosynthesis. This reaction introduces a second double bond into the aromatic ring system. This Streptococcus agalactiae serotype Ia (strain ATCC 27591 / A909 / CDC SS700) protein is Chorismate synthase.